The sequence spans 323 residues: MSFRPGSRGGARGGRGGSRGGFGGRGGSRGGFGGRGGSRGGSRGGFGGRGGSRGGPRGGSRGGPRGGARGGARGGAKGGAKVVIEPHKHDGVYIARGKEDLLVTKNMAPGESVYGEKRVSVEEPSKEDGVPPTKVEYRVWNPFRSKLAAGIMGGLDELFIAPGKKVLYLGAASGTSVSHVSDVVGPEGVVYAVEFSHRPGRELISMAKKRPNVIPIIEDARHPQKYRMLVGMVDAVFADVAQPDQARIIALNSHMFLKDQGGVVISIKANCIDSTVDAETVFAREVQKLREEKIKPLEQLTLEPYERDHCIVIGRYMRSGLKK.

The segment at methionine 1–alanine 80 is disordered. Over residues serine 7–glycine 78 the composition is skewed to gly residues. Residues arginine 8, arginine 12, arginine 15, arginine 19, arginine 25, arginine 29, arginine 35, arginine 39, arginine 43, arginine 49, arginine 53, arginine 57, arginine 61, arginine 65, arginine 69, and arginine 73 each carry the asymmetric dimethylarginine modification. Residues threonine 175–serine 176, glutamate 194–phenylalanine 195, aspartate 219–alanine 220, and aspartate 239–glutamine 242 contribute to the S-adenosyl-L-methionine site.

It belongs to the methyltransferase superfamily. Fibrillarin family. As to quaternary structure, component of box C/D small nucleolar ribonucleoprotein (snoRNP) particles that contain SNU13, NOP1, SIK1/NOP56 and NOP58, plus a guide RNA. Post-translationally, by homology to other fibrillarins, some or all of the N-terminal domain arginines are modified to asymmetric dimethylarginine (DMA).

It is found in the nucleus. Its subcellular location is the nucleolus. It carries out the reaction L-glutaminyl-[histone H2A] + S-adenosyl-L-methionine = N(5)-methyl-L-glutaminyl-[histone H2A] + S-adenosyl-L-homocysteine + H(+). Functionally, S-adenosyl-L-methionine-dependent methyltransferase that has the ability to methylate both RNAs and proteins. Involved in pre-rRNA processing. Utilizes the methyl donor S-adenosyl-L-methionine to catalyze the site-specific 2'-hydroxyl methylation of ribose moieties in pre-ribosomal RNA. Site specificity is provided by a guide RNA that base pairs with the substrate. Methylation occurs at a characteristic distance from the sequence involved in base pairing with the guide RNA. Also acts as a protein methyltransferase by mediating methylation of 'Gln-105' of histone H2A (H2AQ105me), a modification that impairs binding of the FACT complex and is specifically present at 35S ribosomal DNA locus. The polypeptide is rRNA 2'-O-methyltransferase fibrillarin (NOP1) (Candida glabrata (strain ATCC 2001 / BCRC 20586 / JCM 3761 / NBRC 0622 / NRRL Y-65 / CBS 138) (Yeast)).